A 141-amino-acid chain; its full sequence is Nucleoside triphosphatase NudI (141 aa).

Residues 1–141 (MRQRTIVCPL…RHTLALKGLL (141 aa)) form the Nudix hydrolase domain. The Nudix box motif lies at 38 to 59 (GGVEPGERIEEALRREIREELG).

Belongs to the Nudix hydrolase family. NudI subfamily. Monomer. Requires Mg(2+) as cofactor.

The catalysed reaction is a ribonucleoside 5'-triphosphate + H2O = a ribonucleoside 5'-phosphate + diphosphate + H(+). It carries out the reaction a 2'-deoxyribonucleoside 5'-triphosphate + H2O = a 2'-deoxyribonucleoside 5'-phosphate + diphosphate + H(+). The enzyme catalyses dUTP + H2O = dUMP + diphosphate + H(+). It catalyses the reaction dTTP + H2O = dTMP + diphosphate + H(+). The catalysed reaction is dCTP + H2O = dCMP + diphosphate + H(+). Functionally, catalyzes the hydrolysis of nucleoside triphosphates, with a preference for pyrimidine deoxynucleoside triphosphates (dUTP, dTTP and dCTP). The sequence is that of Nucleoside triphosphatase NudI from Salmonella paratyphi B (strain ATCC BAA-1250 / SPB7).